A 156-amino-acid polypeptide reads, in one-letter code: Small ribosomal subunit protein uS7 (156 aa).

This sequence belongs to the universal ribosomal protein uS7 family. As to quaternary structure, part of the 30S ribosomal subunit. Contacts proteins S9 and S11.

Functionally, one of the primary rRNA binding proteins, it binds directly to 16S rRNA where it nucleates assembly of the head domain of the 30S subunit. Is located at the subunit interface close to the decoding center, probably blocks exit of the E-site tRNA. The protein is Small ribosomal subunit protein uS7 of Geobacillus kaustophilus (strain HTA426).